Here is a 403-residue protein sequence, read N- to C-terminus: Renin (403 aa).

The N-terminal stretch at 1 to 22 (MARCRMPRWGLLLVLWGSCTFG) is a signal peptide. The propeptide at 23 to 65 (LPADTGAFRRIFLKKMPSIRESLKERGVDVAGLGAEWNQFTKR) is activation peptide. A glycan (N-linked (GlcNAc...) asparagine) is linked at Asn70. Residues 85-400 (YYGEIGIGTP…DRHNNRIGFA (316 aa)) form the Peptidase A1 domain. Residue Asp103 is part of the active site. An intrachain disulfide couples Cys116 to Cys123. Asn140 carries an N-linked (GlcNAc...) asparagine glycan. Cys279 and Cys283 are oxidised to a cystine. Asp288 is an active-site residue. Cys322 and Cys359 are joined by a disulfide.

It belongs to the peptidase A1 family. In terms of assembly, interacts with ATP6AP2.

Its subcellular location is the secreted. It is found in the membrane. The catalysed reaction is Cleavage of Leu-|-Xaa bond in angiotensinogen to generate angiotensin I.. Its activity is regulated as follows. Interaction with ATP6AP2 results in a 5-fold increased efficiency in angiotensinogen processing. In terms of biological role, renin is a highly specific endopeptidase, whose only known function is to generate angiotensin I from angiotensinogen in the plasma, initiating a cascade of reactions that produce an elevation of blood pressure and increased sodium retention by the kidney. This Canis lupus familiaris (Dog) protein is Renin (REN).